A 248-amino-acid chain; its full sequence is Deoxyribose-phosphate aldolase (248 aa).

Aspartate 117 acts as the Proton donor/acceptor in catalysis. Lysine 179 serves as the catalytic Schiff-base intermediate with acetaldehyde. Catalysis depends on lysine 208, which acts as the Proton donor/acceptor.

Belongs to the DeoC/FbaB aldolase family. DeoC type 1 subfamily.

It localises to the cytoplasm. It carries out the reaction 2-deoxy-D-ribose 5-phosphate = D-glyceraldehyde 3-phosphate + acetaldehyde. It participates in carbohydrate degradation; 2-deoxy-D-ribose 1-phosphate degradation; D-glyceraldehyde 3-phosphate and acetaldehyde from 2-deoxy-alpha-D-ribose 1-phosphate: step 2/2. Functionally, catalyzes a reversible aldol reaction between acetaldehyde and D-glyceraldehyde 3-phosphate to generate 2-deoxy-D-ribose 5-phosphate. This is Deoxyribose-phosphate aldolase from Thermotoga sp. (strain RQ2).